Consider the following 192-residue polypeptide: Holliday junction branch migration complex subunit RuvA (192 aa).

The interval Met1 to Leu64 is domain I. Positions Thr65–Ala139 are domain II. The segment at Ala139–Lys143 is flexible linker. A domain III region spans residues Pro144–Arg192.

It belongs to the RuvA family. Homotetramer. Forms an RuvA(8)-RuvB(12)-Holliday junction (HJ) complex. HJ DNA is sandwiched between 2 RuvA tetramers; dsDNA enters through RuvA and exits via RuvB. An RuvB hexamer assembles on each DNA strand where it exits the tetramer. Each RuvB hexamer is contacted by two RuvA subunits (via domain III) on 2 adjacent RuvB subunits; this complex drives branch migration. In the full resolvosome a probable DNA-RuvA(4)-RuvB(12)-RuvC(2) complex forms which resolves the HJ.

The protein resides in the cytoplasm. Its function is as follows. The RuvA-RuvB-RuvC complex processes Holliday junction (HJ) DNA during genetic recombination and DNA repair, while the RuvA-RuvB complex plays an important role in the rescue of blocked DNA replication forks via replication fork reversal (RFR). RuvA specifically binds to HJ cruciform DNA, conferring on it an open structure. The RuvB hexamer acts as an ATP-dependent pump, pulling dsDNA into and through the RuvAB complex. HJ branch migration allows RuvC to scan DNA until it finds its consensus sequence, where it cleaves and resolves the cruciform DNA. The chain is Holliday junction branch migration complex subunit RuvA from Methylibium petroleiphilum (strain ATCC BAA-1232 / LMG 22953 / PM1).